A 426-amino-acid polypeptide reads, in one-letter code: Glucan endo-1,3-beta-glucosidase 11 (426 aa).

An N-terminal signal peptide occupies residues 1-30 (MELTSFHRSSLLFLISLTLIILPTTTTSIG). N112 carries N-linked (GlcNAc...) asparagine glycosylation. The active-site Proton donor is E121. N-linked (GlcNAc...) asparagine glycosylation is present at N126. Catalysis depends on E266, which acts as the Nucleophile. A compositionally biased stretch (gly residues) spans 360–372 (GGGTGGGNSSSGG). A disordered region spans residues 360–389 (GGGTGGGNSSSGGGRDKSPVFPVSPVAPDS). N-linked (GlcNAc...) asparagine glycosylation is present at N367. A lipid anchor (GPI-anchor amidated serine) is attached at S398. Residues 399–426 (ASPVTGKRKGKGAILSLVVSMLLARHLL) constitute a propeptide, removed in mature form.

The protein belongs to the glycosyl hydrolase 17 family.

The protein resides in the secreted. It localises to the cell wall. The protein localises to the cell membrane. The enzyme catalyses Hydrolysis of (1-&gt;3)-beta-D-glucosidic linkages in (1-&gt;3)-beta-D-glucans.. This Arabidopsis thaliana (Mouse-ear cress) protein is Glucan endo-1,3-beta-glucosidase 11.